Here is an 840-residue protein sequence, read N- to C-terminus: Translation initiation factor IF-2 (840 aa).

Positions 1–251 are disordered; sequence MTEEKKFSSS…GPAVPATERK (251 aa). 2 stretches are compositionally biased toward polar residues: residues 38–50 and 65–83; these read DGTNSSAGTTPRS and NRHTNSSRSNTQGGNASRP. Residues 84–102 show a composition bias toward low complexity; it reads NQSKSQGQGGRNNQRPGSR. 2 stretches are compositionally biased toward basic and acidic residues: residues 110–135 and 158–168; these read PMIREKKNWSTKPREGQIDYSKKTDN and KPAEQSKKAAE. Residues 169 to 207 are compositionally biased toward low complexity; that stretch reads KPAQTKPKTAETKTTATTTQSGTGKFGGALASGNNSARN. Basic residues predominate over residues 230-239; sequence GSKKSRRIAA. In terms of domain architecture, tr-type G spans 341–510; that stretch reads ARPPVVTIMG…LLQAEVLELK (170 aa). The segment at 350-357 is G1; the sequence is GHVDHGKT. 350–357 serves as a coordination point for GTP; the sequence is GHVDHGKT. Positions 375–379 are G2; it reads GITQH. Positions 396–399 are G3; sequence DTPG. GTP is bound by residues 396–400 and 450–453; these read DTPGH and NKID. Residues 450–453 form a G4 region; the sequence is NKID. The interval 486–488 is G5; that stretch reads SAK.

This sequence belongs to the TRAFAC class translation factor GTPase superfamily. Classic translation factor GTPase family. IF-2 subfamily.

The protein localises to the cytoplasm. Its function is as follows. One of the essential components for the initiation of protein synthesis. Protects formylmethionyl-tRNA from spontaneous hydrolysis and promotes its binding to the 30S ribosomal subunits. Also involved in the hydrolysis of GTP during the formation of the 70S ribosomal complex. This Leuconostoc citreum (strain KM20) protein is Translation initiation factor IF-2.